The following is a 781-amino-acid chain: MHYHNKDDWEEISFIGEGQYGRVIKCRKKNGFILNEQVDYVAIKIISKDKFKRNETDILEKIRLFNIPRYYSHAEDDNFIYIYMEYIEGENLANILKTKKQGRFKESRIISMIADLVETLSFLHKHHVIHRDIKTANLVLDKNKNLKLIDFGASTIQNKKQFEQYLNETTNNNNNPNNNNNNNNNNNNNNNNNNNNNNNNNNINNINNNNDLNGSGSGISTYLNEQYKQSSFAIIGTFNYMAPEVKRNYRATRKSDVWSLGCTIIEMAGGDLSQKLNGIPIIPDHLSDTLKDFLNHCLVIDPKKRSYMEELLSHKLIVHIIGPNKSKNYGVEPKFKDDDDFEEIENEKDNYLSSRFPAKFAPQYEKPKWEIEFEELEFDKDDSEGGAGNFGDVKKGLLNETEVAIKFVKKAHCEAITVCDTFYHEVLILSNLRHPNIVQFMAACIKYGEKETNHCIVSEWMSGGNLTQFLMNNHKVLENNPHLRVKLLTDIAKGILYLHKQHIIHRDLTSNNVLLDFKREILPNQLYGSNEFTAKVCDFGLSSNQSESKKLRGGSIHYMAPENLNGSPINEKSDIYSFGLLVWQMFSYAPPNTIYSPKEMASMVSDPKQNYRPQIPFNVPLKFKELITQCWDRNPLNRPKDFSIIIEKLKEIGLTYNRSSSNVSPINSPLINNNNNNYNNNHLNSLSSSLNSSPTYYAKTFGDSNSNIDVYHSADSITPIVSSPPIIKIDLTQDDWDSKLKQLDLEHENKSLISISINDNNNNNINNNNTNNNNVNDLGYC.

Protein kinase domains follow at residues 9–317 and 379–654; these read WEEI…HKLI and DKDD…EIGL. Residues 15 to 23 and Lys44 each bind ATP; that span reads IGEGQYGRV. Asp132 functions as the Proton acceptor in the catalytic mechanism. The disordered stretch occupies residues 168–209; sequence ETTNNNNNPNNNNNNNNNNNNNNNNNNNNNNNNNNINNINNN. Positions 171–209 are enriched in low complexity; it reads NNNNNPNNNNNNNNNNNNNNNNNNNNNNNNNNINNINNN. ATP-binding positions include 385–393 and Lys406; that span reads GGAGNFGDV. The active-site Proton acceptor is the Asp507.

In the N-terminal section; belongs to the protein kinase superfamily. Ser/Thr protein kinase family. This sequence in the C-terminal section; belongs to the protein kinase superfamily. TKL Tyr protein kinase family. N-terminal serine/threonine domain is capable of autophosphorylation, in vitro, but to a lower extent than the tyrosine kinase domain. May function as a negative regulator of the tyrosine kinase domain. Post-translationally, C-terminal tyrosine kinase domain is capable of autophosphorylation, in vitro. In terms of tissue distribution, zakA and zak2 are coexpressed in prestalk cell population, zakA is enriched in pstB populations and zak1 in pstA populations. ZakA and zak2 are coexpressed in prespore cells, zakA expression levels are 10 fold higher than zak2.

It catalyses the reaction L-seryl-[protein] + ATP = O-phospho-L-seryl-[protein] + ADP + H(+). It carries out the reaction L-threonyl-[protein] + ATP = O-phospho-L-threonyl-[protein] + ADP + H(+). The enzyme catalyses L-tyrosyl-[protein] + ATP = O-phospho-L-tyrosyl-[protein] + ADP + H(+). Positive regulator of gsk3/gskA activity required for cell pattern formation and a downstream effector of carC. The kinases, gsk3/gskA, zakA and zak2, form part of a signaling pathway that responds to extracellular cyclic AMP. The pathway has a role in transcriptional regulation; required to direct prespore/spore fates during development. ZakA negatively regulates prestalk differentiation by regulating expression of ecmB. Phosphorylates Y-214 of gsk3/gskA, in vitro. The sequence is that of Dual specificity protein kinase zakA (zakA) from Dictyostelium discoideum (Social amoeba).